The chain runs to 83 residues: Cytochrome c-554(548) (83 aa).

Residues Cys14, Cys17, His18, and Met63 each coordinate heme c.

Homodimer. Post-translationally, binds 1 heme c group covalently per subunit.

This Halomonas halodenitrificans (strain ATCC 12084 / NCIMB 8669) (Paracoccus halodenitrificans) protein is Cytochrome c-554(548).